The sequence spans 167 residues: Brain ribonuclease (167 aa).

Residues 1 to 26 (MALKSLVLLSLLVLVLLLVQVQPSLG) form the signal peptide. The substrate site is built by K33 and R36. Catalysis depends on H38, which acts as the Proton acceptor. 4 cysteine pairs are disulfide-bonded: C52-C110, C66-C121, C84-C136, and C91-C98. 67 to 71 (KPVNT) contributes to the substrate binding site. Residue N88 is glycosylated (N-linked (GlcNAc...) asparagine). The substrate site is built by K92 and R111. H145 serves as the catalytic Proton donor. A glycan (O-linked (GalNAc...) threonine) is linked at T155. The O-linked (GalNAc...) serine glycan is linked to S159.

It belongs to the pancreatic ribonuclease family.

It is found in the secreted. The polypeptide is Brain ribonuclease (BRN) (Bos taurus (Bovine)).